We begin with the raw amino-acid sequence, 90 residues long: Small ribosomal subunit protein bS16 (90 aa).

This sequence belongs to the bacterial ribosomal protein bS16 family.

This Streptococcus thermophilus (strain CNRZ 1066) protein is Small ribosomal subunit protein bS16.